We begin with the raw amino-acid sequence, 357 residues long: MFAKLENLELKFEDLEQQLSSAEVFNDQDRYRKLTKAHADLKQVVDAFRRYKEMKQNLADNKELLGDSDHEIRAMAHEEIKAIEAALPDIEQELKILLLPRDPMDDKNILLEIRAGTGGEEASLFAADLFRMYTRYAEIMGWKVEVLSASDSDTGGYKEIIALIAGDKVYSRLKYESGTHRVQRVPATEAQGRIHTSAATVAVMPEAEEVDVDIRPDDLRIDVYRASGAGGQHVNKTESAVRITHLPTGIVVACQDEKSQHKNKAKAMKVLISRVLQAEQERAHSVIADARRALVGSGDRSERIRTYNYPQSRITDHRINLTLYSLDKVMEGELAPLVDALVTHAQTEALKAQADAS.

N5-methylglutamine is present on Gln-232.

The protein belongs to the prokaryotic/mitochondrial release factor family. Methylated by PrmC. Methylation increases the termination efficiency of RF1.

It is found in the cytoplasm. Its function is as follows. Peptide chain release factor 1 directs the termination of translation in response to the peptide chain termination codons UAG and UAA. The chain is Peptide chain release factor 1 from Nitratidesulfovibrio vulgaris (strain ATCC 29579 / DSM 644 / CCUG 34227 / NCIMB 8303 / VKM B-1760 / Hildenborough) (Desulfovibrio vulgaris).